The chain runs to 204 residues: Molybdenum cofactor guanylyltransferase (204 aa).

GTP contacts are provided by residues 12-14, K25, N53, D71, and D101; that span reads LAG. D101 contributes to the Mg(2+) binding site.

The protein belongs to the MobA family. In terms of assembly, monomer. It depends on Mg(2+) as a cofactor.

It is found in the cytoplasm. The enzyme catalyses Mo-molybdopterin + GTP + H(+) = Mo-molybdopterin guanine dinucleotide + diphosphate. Its function is as follows. Transfers a GMP moiety from GTP to Mo-molybdopterin (Mo-MPT) cofactor (Moco or molybdenum cofactor) to form Mo-molybdopterin guanine dinucleotide (Mo-MGD) cofactor. The polypeptide is Molybdenum cofactor guanylyltransferase (Ralstonia pickettii (strain 12J)).